The following is a 609-amino-acid chain: UvrABC system protein C (609 aa).

The region spanning 13-91 (HEPGVYRMYD…IKLYQPRYNV (79 aa)) is the GIY-YIG domain. The region spanning 201-236 (QQVLDYLIGKMEQASRNLDFEQAARYRDQIQAVRSV) is the UVR domain.

This sequence belongs to the UvrC family. Interacts with UvrB in an incision complex.

It localises to the cytoplasm. The UvrABC repair system catalyzes the recognition and processing of DNA lesions. UvrC both incises the 5' and 3' sides of the lesion. The N-terminal half is responsible for the 3' incision and the C-terminal half is responsible for the 5' incision. This Haemophilus influenzae (strain ATCC 51907 / DSM 11121 / KW20 / Rd) protein is UvrABC system protein C.